A 197-amino-acid chain; its full sequence is Large ribosomal subunit protein mL58 (197 aa).

Residues 1 to 20 (MLFTIKPSFLKPVGFIQTRN) constitute a mitochondrion transit peptide.

It belongs to the mitochondrion-specific ribosomal protein mL58 family. As to quaternary structure, component of the mitochondrial large ribosomal subunit (mt-LSU). Mature yeast 74S mitochondrial ribosomes consist of a small (37S) and a large (54S) subunit. The 37S small subunit contains a 15S ribosomal RNA (15S mt-rRNA) and at least 32 different proteins. The 54S large subunit contains a 21S rRNA (21S mt-rRNA) and at least 45 different proteins.

Its subcellular location is the mitochondrion. Its function is as follows. Component of the mitochondrial ribosome (mitoribosome), a dedicated translation machinery responsible for the synthesis of mitochondrial genome-encoded proteins, including at least some of the essential transmembrane subunits of the mitochondrial respiratory chain. The mitoribosomes are attached to the mitochondrial inner membrane and translation products are cotranslationally integrated into the membrane. This chain is Large ribosomal subunit protein mL58 (mrpl20), found in Schizosaccharomyces pombe (strain 972 / ATCC 24843) (Fission yeast).